Here is a 118-residue protein sequence, read N- to C-terminus: Basic phospholipase A2 CM-III (118 aa).

Disulfide bonds link Cys11-Cys70, Cys26-Cys117, Cys28-Cys44, Cys43-Cys98, Cys50-Cys91, Cys59-Cys84, and Cys77-Cys89. Residues Tyr27, Gly29, and Gly31 each coordinate Ca(2+). His47 is a catalytic residue. Asp48 serves as a coordination point for Ca(2+). A Coagulation factor Xa binding motif motif is present at residues 52–69 (EKAGKMGCWPYFTLYKYK). The active site involves Asp92.

Belongs to the phospholipase A2 family. Group I subfamily. D49 sub-subfamily. Ca(2+) is required as a cofactor. As to expression, expressed by the venom gland.

It is found in the secreted. It carries out the reaction a 1,2-diacyl-sn-glycero-3-phosphocholine + H2O = a 1-acyl-sn-glycero-3-phosphocholine + a fatty acid + H(+). Functionally, snake venom phospholipase A2 (PLA2) that shows several activities. It shows strong anticoagulant activity, probably by binding to coagulation factor Xa (F10) and inhibiting the formation of the prothrombinase complex, shows direct hemolytic action, causes neuromuscular blockade with a gradual contracture and a decreased sensitivity to ACh and KCl, abolishes twitches evoked by indirect stimulation earlier than those by direct stimulation (in the mouse phrenic nerve-diaphragm preparation), and causes myonecrosis when injected intramuscularly. PLA2 catalyzes the calcium-dependent hydrolysis of the 2-acyl groups in 3-sn-phosphoglycerides. In Naja mossambica (Mozambique spitting cobra), this protein is Basic phospholipase A2 CM-III.